Here is a 468-residue protein sequence, read N- to C-terminus: Na(+)/H(+) antiporter NhaA (468 aa).

A run of 12 helical transmembrane segments spans residues 28 to 48, 79 to 99, 115 to 135, 143 to 163, 173 to 193, 196 to 216, 219 to 239, 240 to 260, 317 to 337, 356 to 376, 392 to 412, and 426 to 446; these read FLHVEAVSGAVLLAAAAIALV, LHFWINDALMTLFFLAVGMEI, ALPLAAALGGVVAPALIYLAF, AGWAVPTATDIAFAVGVLALL, IFLLALAIIDDIIAVLIIAFF, GGLDYSGFAVAALGIAIVLGL, IGIGTAYAYVLPGAIVWTGLL, MTGAHPTLAGVVLGLMTPVVP, ALHPWVAYAIMPLFALANAGV, VAGALIVGKPAGVIAMSWLLV, IVLIGLLAGVGFTMSIFIAML, and LGVLLGSLATAMLGLAWGAIY.

The protein belongs to the NhaA Na(+)/H(+) (TC 2.A.33) antiporter family.

It localises to the cell inner membrane. The catalysed reaction is Na(+)(in) + 2 H(+)(out) = Na(+)(out) + 2 H(+)(in). Functionally, na(+)/H(+) antiporter that extrudes sodium in exchange for external protons. The polypeptide is Na(+)/H(+) antiporter NhaA (Bordetella petrii (strain ATCC BAA-461 / DSM 12804 / CCUG 43448)).